The chain runs to 409 residues: Elongation factor Tu, chloroplastic (409 aa).

A tr-type G domain is found at 10–214 (KPHVNIGTIG…AVDEYIPTPE (205 aa)). The G1 stretch occupies residues 19 to 26 (GHVDHGKT). Position 19–26 (19–26 (GHVDHGKT)) interacts with GTP. A Mg(2+)-binding site is contributed by T26. The segment at 60 to 64 (GITIN) is G2. A G3 region spans residues 81–84 (DCPG). Residues 81–85 (DCPGH) and 136–139 (NKED) contribute to the GTP site. The tract at residues 136-139 (NKED) is G4. Residues 174–176 (SAL) are G5.

This sequence belongs to the TRAFAC class translation factor GTPase superfamily. Classic translation factor GTPase family. EF-Tu/EF-1A subfamily.

Its subcellular location is the plastid. The protein resides in the chloroplast. It catalyses the reaction GTP + H2O = GDP + phosphate + H(+). Functionally, GTP hydrolase that promotes the GTP-dependent binding of aminoacyl-tRNA to the A-site of ribosomes during protein biosynthesis. The chain is Elongation factor Tu, chloroplastic (tufA) from Trieres chinensis (Marine centric diatom).